A 274-amino-acid polypeptide reads, in one-letter code: MEIKMAKDYGFCFGVKRAIQIAEKNQNSLIFGSLIHNAKEINRLEKNFNVKIEEDPKKIPKNKSVIIRTHGIPKQDLEYLKNKGVKITDATCPYVIKPQQIVESMSKEGYQIVLFGDINHPEVKGVISYATNQALVVNSLEELQEKKLQRKVALVSQTTKQTPKLLQIASYLVERCTEVRIFNTICNATSYNQKAALDLSKEVDIMIVVGGKTSSNTKQLLSIAKQHCKDSYLVEDENELELAWFKDKKLCGITAGASTPDWIIENVKQKISTI.

[4Fe-4S] cluster is bound at residue C12. H36 and H70 together coordinate (2E)-4-hydroxy-3-methylbut-2-enyl diphosphate. Dimethylallyl diphosphate contacts are provided by H36 and H70. The isopentenyl diphosphate site is built by H36 and H70. C92 contacts [4Fe-4S] cluster. H120 lines the (2E)-4-hydroxy-3-methylbut-2-enyl diphosphate pocket. H120 is a binding site for dimethylallyl diphosphate. Position 120 (H120) interacts with isopentenyl diphosphate. Residue E122 is the Proton donor of the active site. Position 158 (T158) interacts with (2E)-4-hydroxy-3-methylbut-2-enyl diphosphate. C186 provides a ligand contact to [4Fe-4S] cluster. 4 residues coordinate (2E)-4-hydroxy-3-methylbut-2-enyl diphosphate: S214, S215, N216, and S258. S214, S215, N216, and S258 together coordinate dimethylallyl diphosphate. S214, S215, N216, and S258 together coordinate isopentenyl diphosphate.

The protein belongs to the IspH family. It depends on [4Fe-4S] cluster as a cofactor.

The enzyme catalyses isopentenyl diphosphate + 2 oxidized [2Fe-2S]-[ferredoxin] + H2O = (2E)-4-hydroxy-3-methylbut-2-enyl diphosphate + 2 reduced [2Fe-2S]-[ferredoxin] + 2 H(+). The catalysed reaction is dimethylallyl diphosphate + 2 oxidized [2Fe-2S]-[ferredoxin] + H2O = (2E)-4-hydroxy-3-methylbut-2-enyl diphosphate + 2 reduced [2Fe-2S]-[ferredoxin] + 2 H(+). Its pathway is isoprenoid biosynthesis; dimethylallyl diphosphate biosynthesis; dimethylallyl diphosphate from (2E)-4-hydroxy-3-methylbutenyl diphosphate: step 1/1. It participates in isoprenoid biosynthesis; isopentenyl diphosphate biosynthesis via DXP pathway; isopentenyl diphosphate from 1-deoxy-D-xylulose 5-phosphate: step 6/6. In terms of biological role, catalyzes the conversion of 1-hydroxy-2-methyl-2-(E)-butenyl 4-diphosphate (HMBPP) into a mixture of isopentenyl diphosphate (IPP) and dimethylallyl diphosphate (DMAPP). Acts in the terminal step of the DOXP/MEP pathway for isoprenoid precursor biosynthesis. This chain is 4-hydroxy-3-methylbut-2-enyl diphosphate reductase, found in Helicobacter pylori (strain P12).